Reading from the N-terminus, the 106-residue chain is UPF0145 protein CTC_01500 (106 aa).

The protein belongs to the UPF0145 family.

The chain is UPF0145 protein CTC_01500 from Clostridium tetani (strain Massachusetts / E88).